Reading from the N-terminus, the 224-residue chain is Probable proteasome subunit beta type-4 (224 aa).

This sequence belongs to the peptidase T1B family. As to quaternary structure, the 26S proteasome consists of a 20S proteasome core and two 19S regulatory subunits. The 20S proteasome core is composed of 28 subunits that are arranged in four stacked rings, resulting in a barrel-shaped structure. The two end rings are each formed by seven alpha subunits, and the two central rings are each formed by seven beta subunits. The catalytic chamber with the active sites is on the inside of the barrel.

The protein resides in the cytoplasm. It is found in the nucleus. Non-catalytic component of the proteasome, a multicatalytic proteinase complex which is characterized by its ability to cleave peptides with Arg, Phe, Tyr, Leu, and Glu adjacent to the leaving group at neutral or slightly basic pH. The proteasome has an ATP-dependent proteolytic activity. The polypeptide is Probable proteasome subunit beta type-4 (CPR1) (Cryptococcus neoformans var. neoformans serotype D (strain B-3501A) (Filobasidiella neoformans)).